The primary structure comprises 345 residues: MAASGKLGTFRLPPLPTIREIIKLFGLRAAKQLSQNFLLDLRLTDKIVRKAGSLADVYVYEVGPGPGGITRSILNADIAELLVVEKDTRFIPGLQMLSDAAPGKLRIVHGDVLTYKIEKAFPDNIRRQWEDDPPNVHIIGNLPFSVSTPLIIKWLENISLKNGPFVYGRTKMTLTFQKEVAERLVATTGSKQRSRLSIMAQYLCNVEHLFTIPGKAFVPKPEVDVGVVHLMPLVQPKIKQPFKLVEKVVQNVFQFRRKYCHRGLGMLFPEAQRLESTGRLLQLADIDPTLRPTHLSLMHFKSLCDVYRKMCDEDPQLFAYNFREELKQKKRKGQEKDGDSESWGF.

A mitochondrion-targeting transit peptide spans 1–27; the sequence is MAASGKLGTFRLPPLPTIREIIKLFGL. S-adenosyl-L-methionine is bound by residues 35–38, N36, L38, G63, E85, D111, and N141; that span reads QNFL.

This sequence belongs to the class I-like SAM-binding methyltransferase superfamily. rRNA adenine N(6)-methyltransferase family. KsgA subfamily. As to quaternary structure, interacts with mitochondrial RNA polymerase POLRMT. Interacts with TFAM.

It is found in the mitochondrion. Functionally, S-adenosyl-L-methionine-dependent methyltransferase which specifically dimethylates mitochondrial 12S rRNA at the conserved stem loop. Also required for basal transcription of mitochondrial DNA, probably via its interaction with POLRMT and TFAM. Stimulates transcription independently of the methyltransferase activity. The protein is Dimethyladenosine transferase 1, mitochondrial (Tfb1m) of Rattus norvegicus (Rat).